We begin with the raw amino-acid sequence, 584 residues long: Inactive metallocarboxypeptidase ECM14 (584 aa).

Residues 1–20 (MHLLPVITAVALIYTPLASA) form the signal peptide. The propeptide occupies 21–174 (VPSSSNPQFP…QAVYESYPQP (154 aa)). The Peptidase M14 domain maps to 202-524 (DYQPLSVMTP…NAVLEFGKFL (323 aa)). Residues His267 and Glu270 each contribute to the Zn(2+) site. Substrate is bound by residues 267 to 270 (HARE), Arg325, and 342 to 343 (DR). Cys336 and Cys359 are oxidised to a cystine. N-linked (GlcNAc...) asparagine glycans are attached at residues Asn383 and Asn389. A Zn(2+)-binding site is contributed by His399. Position 400–401 (400–401 (SY)) interacts with substrate. Positions 564 to 584 (QQLDDEDGEADSHWVLRTQRS) are disordered.

Belongs to the peptidase M14 family. It depends on Zn(2+) as a cofactor.

The protein resides in the vacuole. The protein localises to the secreted. Its function is as follows. Inactive carboxypeptidase that may play a role in cell wall organization and biogenesis. This is Inactive metallocarboxypeptidase ECM14 (ECM14) from Uncinocarpus reesii (strain UAMH 1704).